A 688-amino-acid polypeptide reads, in one-letter code: Two-component response regulator ORR23 (688 aa).

In terms of domain architecture, Response regulatory spans 25–140; the sequence is RVLAVDDDPV…ELRNIWQHVI (116 aa). A 4-aspartylphosphate modification is found at Asp76. Residues 161–212 form a disordered region; the sequence is PPNADSDHVHGHVTCGSPDQSGRPSKKRKEYCSEEEDEGEVNTQDIDDPSAP. Acidic residues predominate over residues 193-208; sequence SEEEDEGEVNTQDIDD. Residues 211–270 constitute a DNA-binding region (myb-like GARP); it reads APKKPRVVWSVELHRKFVAAVNQLGIDKAVPKRILELMNVEKLTRENVASHLQKYRLYLK.

The protein belongs to the ARR family. Type-B subfamily. Two-component system major event consists of a His-to-Asp phosphorelay between a sensor histidine kinase (HK) and a response regulator (RR). In plants, the His-to-Asp phosphorelay involves an additional intermediate named Histidine-containing phosphotransfer protein (HPt). This multistep phosphorelay consists of a His-Asp-His-Asp sequential transfer of a phosphate group between first a His and an Asp of the HK protein, followed by the transfer to a conserved His of the HPt protein and finally the transfer to an Asp in the receiver domain of the RR protein.

The protein resides in the nucleus. Functionally, transcriptional activator that binds specific DNA sequence. Functions as a response regulator involved in His-to-Asp phosphorelay signal transduction system. Phosphorylation of the Asp residue in the receiver domain activates the ability of the protein to promote the transcription of target genes. May directly activate some type-A response regulators in response to cytokinins. This is Two-component response regulator ORR23 from Oryza sativa subsp. indica (Rice).